Reading from the N-terminus, the 330-residue chain is Free fatty acid receptor 2 (330 aa).

The Extracellular segment spans residues 1 to 12 (MLPDWKSSLILM). Residues 13 to 33 (AYIIIFLTGLPANLLALRAFV) traverse the membrane as a helical segment. The Cytoplasmic portion of the chain corresponds to 34–41 (GRIRQPQP). A helical membrane pass occupies residues 42 to 62 (APVHILLLSLTLADLLLLLLL). The Extracellular segment spans residues 63–84 (PFKIIEAASNFRWYLPKVVCAL). A helical membrane pass occupies residues 85–105 (TSFGFYSSIYCSTWLLAGISI). Topologically, residues 106–126 (ERYLGVAFPVQYKLSRRPLYG) are cytoplasmic. The helical transmembrane segment at 127–147 (VIAALVAWVMSFGHCTIVIIV) threads the bilayer. The Extracellular portion of the chain corresponds to 148 to 173 (QYLNTTEQVRSGNEITCYENFTDNQL). Asparagine 151 and asparagine 167 each carry an N-linked (GlcNAc...) asparagine glycan. Residues 174–194 (DVVLPVRLELCLVLFFIPMAV) form a helical membrane-spanning segment. Over 195–219 (TIFCYWRFVWIMLSQPLVGAQRRRR) the chain is Cytoplasmic. The chain crosses the membrane as a helical span at residues 220–240 (AVGLAVVTLLNFLVCFGPYNV). Topologically, residues 241-255 (SHLVGYHQRKSPWWR) are extracellular. A helical transmembrane segment spans residues 256 to 276 (SIAVVFSSLNASLDPLLFYFS). Topologically, residues 277-330 (SSVVRRAFGRGLQVLRNQGSSLLGRRGKDTAEGTNEDRGVGQGEGMPSSDFTTE) are cytoplasmic. The disordered stretch occupies residues 299 to 330 (LGRRGKDTAEGTNEDRGVGQGEGMPSSDFTTE). Residues 302–315 (RGKDTAEGTNEDRG) are compositionally biased toward basic and acidic residues.

It belongs to the G-protein coupled receptor 1 family. Interacts with FCN1 (via Fibrinogen C-terminal domain). Expressed at relatively high levels in peripheral blood leukocytes and, to lesser extent, in spleen.

It localises to the cell membrane. In terms of biological role, g protein-coupled receptor that is activated by a major product of dietary fiber digestion, the short chain fatty acids (SCFAs), and that plays a role in the regulation of whole-body energy homeostasis and in intestinal immunity. In omnivorous mammals, the short chain fatty acids acetate, propionate and butyrate are produced primarily by the gut microbiome that metabolizes dietary fibers. SCFAs serve as a source of energy but also act as signaling molecules. That G protein-coupled receptor is probably coupled to the pertussis toxin-sensitive, G(i/o)-alpha family of G proteins but also to the Gq family. Its activation results in the formation of inositol 1,4,5-trisphosphate, the mobilization of intracellular calcium, the phosphorylation of the MAPK3/ERK1 and MAPK1/ERK2 kinases and the inhibition of intracellular cAMP accumulation. May play a role in glucose homeostasis by regulating the secretion of GLP-1, in response to short-chain fatty acids accumulating in the intestine. May also regulate the production of LEP/Leptin, a hormone acting on the central nervous system to inhibit food intake. Finally, may also regulate whole-body energy homeostasis through adipogenesis regulating both differentiation and lipid storage of adipocytes. In parallel to its role in energy homeostasis, may also mediate the activation of the inflammatory and immune responses by SCFA in the intestine, regulating the rapid production of chemokines and cytokines. May also play a role in the resolution of the inflammatory response and control chemotaxis in neutrophils. In addition to SCFAs, may also be activated by the extracellular lectin FCN1 in a process leading to activation of monocytes and inducing the secretion of interleukin-8/IL-8 in response to the presence of microbes. Among SCFAs, the fatty acids containing less than 6 carbons, the most potent activators are probably acetate, propionate and butyrate. Exhibits a SCFA-independent constitutive G protein-coupled receptor activity. This chain is Free fatty acid receptor 2 (FFAR2), found in Homo sapiens (Human).